Reading from the N-terminus, the 372-residue chain is N-methyl-L-tryptophan oxidase (372 aa).

4 to 34 (DLIIIGSGSVGAAAGYYATRAGLKVLMTDAH) lines the FAD pocket. Position 307 is an S-8alpha-FAD cysteine (Cys307).

Belongs to the MSOX/MTOX family. MTOX subfamily. In terms of assembly, monomer. It depends on FAD as a cofactor.

The enzyme catalyses N(alpha)-methyl-L-tryptophan + O2 + H2O = L-tryptophan + formaldehyde + H2O2. Functionally, catalyzes the oxidative demethylation of N-methyl-L-tryptophan. The sequence is that of N-methyl-L-tryptophan oxidase from Salmonella typhi.